Consider the following 342-residue polypeptide: 4-hydroxy-2-oxovalerate aldolase (342 aa).

Residues isoleucine 7–glutamine 259 enclose the Pyruvate carboxyltransferase domain. Arginine 15 to aspartate 16 provides a ligand contact to substrate. Aspartate 16 contributes to the Mn(2+) binding site. Histidine 19 serves as the catalytic Proton acceptor. Substrate contacts are provided by serine 169 and histidine 198. Positions 198 and 200 each coordinate Mn(2+). Tyrosine 289 lines the substrate pocket.

The protein belongs to the 4-hydroxy-2-oxovalerate aldolase family.

The catalysed reaction is (S)-4-hydroxy-2-oxopentanoate = acetaldehyde + pyruvate. In Alkalilimnicola ehrlichii (strain ATCC BAA-1101 / DSM 17681 / MLHE-1), this protein is 4-hydroxy-2-oxovalerate aldolase.